Consider the following 457-residue polypeptide: Ribulose bisphosphate carboxylase large chain (457 aa).

Positions 1–2 are excised as a propeptide; the sequence is MS. Residue Pro-3 is modified to N-acetylproline. At Lys-14 the chain carries N6,N6,N6-trimethyllysine. Substrate contacts are provided by Asn-123 and Thr-173. Residue Lys-175 is the Proton acceptor of the active site. Lys-177 contacts substrate. Positions 201, 203, and 204 each coordinate Mg(2+). An N6-carboxylysine modification is found at Lys-201. His-294 functions as the Proton acceptor in the catalytic mechanism. Arg-295, His-327, and Ser-379 together coordinate substrate.

The protein belongs to the RuBisCO large chain family. Type I subfamily. In terms of assembly, heterohexadecamer of 8 large chains and 8 small chains; disulfide-linked. The disulfide link is formed within the large subunit homodimers. Mg(2+) is required as a cofactor. In terms of processing, the disulfide bond which can form in the large chain dimeric partners within the hexadecamer appears to be associated with oxidative stress and protein turnover.

It is found in the plastid. It localises to the chloroplast. The enzyme catalyses 2 (2R)-3-phosphoglycerate + 2 H(+) = D-ribulose 1,5-bisphosphate + CO2 + H2O. It catalyses the reaction D-ribulose 1,5-bisphosphate + O2 = 2-phosphoglycolate + (2R)-3-phosphoglycerate + 2 H(+). In terms of biological role, ruBisCO catalyzes two reactions: the carboxylation of D-ribulose 1,5-bisphosphate, the primary event in carbon dioxide fixation, as well as the oxidative fragmentation of the pentose substrate in the photorespiration process. Both reactions occur simultaneously and in competition at the same active site. The protein is Ribulose bisphosphate carboxylase large chain of Phelline comosa.